We begin with the raw amino-acid sequence, 471 residues long: Ribulose bisphosphate carboxylase large chain (471 aa).

The substrate site is built by Asn-115 and Thr-165. Lys-167 (proton acceptor) is an active-site residue. Lys-169 is a substrate binding site. Lys-193, Asp-195, and Glu-196 together coordinate Mg(2+). Lys-193 is modified (N6-carboxylysine). His-286 (proton acceptor) is an active-site residue. Substrate-binding residues include Arg-287, His-319, and Ser-371.

Belongs to the RuBisCO large chain family. Type I subfamily. As to quaternary structure, heterohexadecamer of 8 large chains and 8 small chains. The cofactor is Mg(2+).

It localises to the carboxysome. The enzyme catalyses 2 (2R)-3-phosphoglycerate + 2 H(+) = D-ribulose 1,5-bisphosphate + CO2 + H2O. It catalyses the reaction D-ribulose 1,5-bisphosphate + O2 = 2-phosphoglycolate + (2R)-3-phosphoglycerate + 2 H(+). Its function is as follows. RuBisCO catalyzes two reactions: the carboxylation of D-ribulose 1,5-bisphosphate, the primary event in carbon dioxide fixation, as well as the oxidative fragmentation of the pentose substrate in the photorespiration process. Both reactions occur simultaneously and in competition at the same active site. The protein is Ribulose bisphosphate carboxylase large chain of Synechococcus sp. (strain RCC307).